The sequence spans 486 residues: MTDEKLNDHTVKAPEYLPDILTVESLDMEAQGIAHRADGKVVFIEGALPFERVTANVYRKKSSFEKAVVMAIHRESSQRVRPACPHFGLHTGACGGCKMQHLHVGAQVAVKQRVLEDNLWHIGKVKADNLLRPIEGPAWGYRYRARLSVRYVRKKNAVLVGFHERKSSYVADMTECHVVPRHVSDMLVPLRELIAGMDARETLPQIELACGDTVTAMVLRHMEPLSSGDLARLRAFAVSHPGLQWWLQPGGLDSVKLLDEGVPELSYDLPEFGITMPFKPTDFTQVNPHINQVLVSRALRLLAVQPHERVIDWFCGLGNFTLPLATCAREVLGIEGSEALVARSCQNFKKNQPASQSRSALSATEFVARNLFEMTPAMLVKDGMADKWLVDPPREGAFELFKSLAALHQQMVTGVPCDDGEQQQSLVLGDWTPPQRIVYVSCNPATLARDAGVLVESGAYRCTLAGVVNMFPHTAHVESIAVFERG.

The 62-residue stretch at 10–71 (TVKAPEYLPD…SSFEKAVVMA (62 aa)) folds into the TRAM domain. Cysteine 84, cysteine 94, cysteine 97, and cysteine 176 together coordinate [4Fe-4S] cluster. 6 residues coordinate S-adenosyl-L-methionine: glutamine 285, phenylalanine 314, asparagine 319, glutamate 335, asparagine 370, and aspartate 391. Cysteine 442 (nucleophile) is an active-site residue.

This sequence belongs to the class I-like SAM-binding methyltransferase superfamily. RNA M5U methyltransferase family. RlmD subfamily.

The catalysed reaction is uridine(1939) in 23S rRNA + S-adenosyl-L-methionine = 5-methyluridine(1939) in 23S rRNA + S-adenosyl-L-homocysteine + H(+). Functionally, catalyzes the formation of 5-methyl-uridine at position 1939 (m5U1939) in 23S rRNA. The sequence is that of 23S rRNA (uracil(1939)-C(5))-methyltransferase RlmD from Polaromonas sp. (strain JS666 / ATCC BAA-500).